Here is a 258-residue protein sequence, read N- to C-terminus: Calcium release-activated calcium channel protein 1 (258 aa).

Residues 1–63 (MYPECGVETK…SRAKLKASSR (63 aa)) are Cytoplasmic-facing. Residues 64 to 81 (TSALLSGFAMVAMVEVQL) traverse the membrane as a helical segment. At 82-91 (EPNHAYPPGL) the chain is on the extracellular side. Residues 92–112 (LIAFSACTTVLVAVHLFALMV) traverse the membrane as a helical segment. Residues 113–145 (STCILPNIEAVSNVHNLNSVKESPHERMHHHIE) are Cytoplasmic-facing. The helical transmembrane segment at 146–166 (LAWAFSTVIGTLLFLAEVVLL) threads the bilayer. The Extracellular segment spans residues 167-192 (CWVKFLPVNSPKISSNETSAVSSGQA). Residue asparagine 182 is glycosylated (N-linked (GlcNAc...) asparagine). The chain crosses the membrane as a helical span at residues 193-213 (AAITSTAIMVPFGLVFIVFAV). Residues 214 to 258 (HFYRSLVSHKTDRQFQELNELAELAQLQDQLDHRGDPVQSPVHYA) lie on the Cytoplasmic side of the membrane.

It belongs to the Orai family.

The protein resides in the cell membrane. Functionally, ca(2+) release-activated Ca(2+) (CRAC) channel subunit which mediates Ca(2+) influx following depletion of intracellular Ca(2+) stores. In Xenopus laevis (African clawed frog), this protein is Calcium release-activated calcium channel protein 1 (orai1).